A 443-amino-acid polypeptide reads, in one-letter code: UDP-N-acetylglucosamine 1-carboxyvinyltransferase 1 (443 aa).

Residue K22–N23 coordinates phosphoenolpyruvate. R95 lines the UDP-N-acetyl-alpha-D-glucosamine pocket. C119 (proton donor) is an active-site residue. Residue C119 is modified to 2-(S-cysteinyl)pyruvic acid O-phosphothioketal. UDP-N-acetyl-alpha-D-glucosamine contacts are provided by residues R124–L128, D308, and V330.

Belongs to the EPSP synthase family. MurA subfamily.

Its subcellular location is the cytoplasm. It catalyses the reaction phosphoenolpyruvate + UDP-N-acetyl-alpha-D-glucosamine = UDP-N-acetyl-3-O-(1-carboxyvinyl)-alpha-D-glucosamine + phosphate. The protein operates within cell wall biogenesis; peptidoglycan biosynthesis. Cell wall formation. Adds enolpyruvyl to UDP-N-acetylglucosamine. This chain is UDP-N-acetylglucosamine 1-carboxyvinyltransferase 1, found in Oceanobacillus iheyensis (strain DSM 14371 / CIP 107618 / JCM 11309 / KCTC 3954 / HTE831).